Here is a 144-residue protein sequence, read N- to C-terminus: Large ribosomal subunit protein uL15 (144 aa).

A disordered region spans residues 1–54 (MHLNTLKPAEGAKKLAKRKGRGQGSGNGKMAGRGHKGQKSRSGGMPKIGFEGGQ). Over residues 22–31 (GQGSGNGKMA) the composition is skewed to gly residues.

It belongs to the universal ribosomal protein uL15 family. Part of the 50S ribosomal subunit.

In terms of biological role, binds to the 23S rRNA. This chain is Large ribosomal subunit protein uL15, found in Hydrogenovibrio crunogenus (strain DSM 25203 / XCL-2) (Thiomicrospira crunogena).